We begin with the raw amino-acid sequence, 492 residues long: Glycerol kinase (492 aa).

An ADP-binding site is contributed by T11. Positions 11 and 12 each coordinate ATP. T11 contributes to the sn-glycerol 3-phosphate binding site. Position 15 (K15) interacts with ADP. 4 residues coordinate sn-glycerol 3-phosphate: R79, E80, Y129, and D238. R79, E80, Y129, D238, and Q239 together coordinate glycerol. ADP-binding residues include T260, G302, G403, and N407. ATP is bound by residues T260, G302, and G403.

Belongs to the FGGY kinase family.

The enzyme catalyses glycerol + ATP = sn-glycerol 3-phosphate + ADP + H(+). It participates in polyol metabolism; glycerol degradation via glycerol kinase pathway; sn-glycerol 3-phosphate from glycerol: step 1/1. With respect to regulation, inhibited by fructose 1,6-bisphosphate (FBP). Its function is as follows. Key enzyme in the regulation of glycerol uptake and metabolism. Catalyzes the phosphorylation of glycerol to yield sn-glycerol 3-phosphate. The sequence is that of Glycerol kinase from Aquifex aeolicus (strain VF5).